A 513-amino-acid chain; its full sequence is Noroxomaritidine synthase 2 (513 aa).

The helical transmembrane segment at 14-34 (HYPEILIAIACFLIFSLLLSA) threads the bilayer. Position 458 (C458) interacts with heme.

It belongs to the cytochrome P450 family. Heme serves as cofactor. Mostly expressed in stems, and, to a lower extent, in bulbs, roots, leaves and flowers.

It is found in the membrane. The catalysed reaction is 4'-O-methylnorbelladine + reduced [NADPH--hemoprotein reductase] + O2 = (10bR,4aS)-noroxomaritidine + oxidized [NADPH--hemoprotein reductase] + 2 H2O + H(+). It carries out the reaction 4'-O-methylnorbelladine + reduced [NADPH--hemoprotein reductase] + O2 = (10bS,4aR)-noroxomaritidine + oxidized [NADPH--hemoprotein reductase] + 2 H2O + H(+). Its pathway is alkaloid biosynthesis. Its function is as follows. Cytochrome P450 that catalyzes an intramolecular para-para' C-C phenol coupling of 4'-O-methylnorbelladine in alkaloids biosynthesis, including haemanthamine- and crinamine-type alkaloids, promising anticancer agents. Catalyzes the formation of (10bR,4aS)-noroxomaritidine and (10bS,4aR)-noroxomaritidine from 4'-O-methylnorbelladine. The polypeptide is Noroxomaritidine synthase 2 (Narcissus pseudonarcissus (Daffodil)).